A 130-amino-acid chain; its full sequence is Glycine cleavage system H protein (130 aa).

The 83-residue stretch at 28-110 folds into the Lipoyl-binding domain; it reads TVRIGITSVA…FGEGWLFEVE (83 aa). Lys69 carries the N6-lipoyllysine modification.

It belongs to the GcvH family. In terms of assembly, the glycine cleavage system is composed of four proteins: P, T, L and H. (R)-lipoate is required as a cofactor.

In terms of biological role, the glycine cleavage system catalyzes the degradation of glycine. The H protein shuttles the methylamine group of glycine from the P protein to the T protein. This is Glycine cleavage system H protein from Corynebacterium aurimucosum (strain ATCC 700975 / DSM 44827 / CIP 107346 / CN-1) (Corynebacterium nigricans).